Consider the following 343-residue polypeptide: MECNPVSSTTSSSLLWDWDATASAEPPPPPGKRGGRDSSSASASAKRGRSAAAAGDAAAVAAEAPRCQVEGCGLELGGYKEYYRKHRVCEPHTKCLRVVVAGQDRRFCQQCSRFHAPSEFDQEKRSCRRRLSDHNARRRKPQTDVFAFGSGTLPRSLFDDRQQISFAWDNNAPLNHANTTSSSSWTSDLQLSQVMDISKRSRKAGADSANIRLSNALPTLCHDTNELLPIKGADASETASKLDGALDVQRALSLLSASSRGLTDPGHQTSSIIQFTNSNQNSTLPSVPSEGNSNVPFWVDGQHQAVEPQVFQFTMDTGNTVFPDLERIKPSYESSMFGLNQIH.

Positions 1–48 (MECNPVSSTTSSSLLWDWDATASAEPPPPPGKRGGRDSSSASASAKRG) are disordered. Low complexity-rich tracts occupy residues 7–19 (SSTTSSSLLWDWD) and 37–48 (DSSSASASAKRG). An SBP-type zinc finger spans residues 64-141 (APRCQVEGCG…SDHNARRRKP (78 aa)). Zn(2+) is bound by residues Cys67, Cys72, Cys89, His92, Cys108, Cys111, His115, and Cys127. The Bipartite nuclear localization signal signature appears at 124–140 (KRSCRRRLSDHNARRRK).

Expressed in stems, leaf sheaths, and young panicles.

Its subcellular location is the nucleus. Trans-acting factor that binds specifically to the consensus nucleotide sequence 5'-TNCGTACAA-3'. May be involved in panicle development. This is Squamosa promoter-binding-like protein 11 (SPL11) from Oryza sativa subsp. japonica (Rice).